The sequence spans 232 residues: dITP/XTP pyrophosphatase (232 aa).

Residue 10-15 (TRNKGK) coordinates substrate. Residue D72 is the Proton acceptor of the active site. D72 is a Mg(2+) binding site. Substrate contacts are provided by residues S73, 153-156 (FGYD), K176, and 181-182 (HR).

This sequence belongs to the HAM1 NTPase family. As to quaternary structure, homodimer. Mg(2+) is required as a cofactor.

It catalyses the reaction XTP + H2O = XMP + diphosphate + H(+). It carries out the reaction dITP + H2O = dIMP + diphosphate + H(+). The catalysed reaction is ITP + H2O = IMP + diphosphate + H(+). Its function is as follows. Pyrophosphatase that catalyzes the hydrolysis of nucleoside triphosphates to their monophosphate derivatives, with a high preference for the non-canonical purine nucleotides XTP (xanthosine triphosphate), dITP (deoxyinosine triphosphate) and ITP. Seems to function as a house-cleaning enzyme that removes non-canonical purine nucleotides from the nucleotide pool, thus preventing their incorporation into DNA/RNA and avoiding chromosomal lesions. This Syntrophobacter fumaroxidans (strain DSM 10017 / MPOB) protein is dITP/XTP pyrophosphatase.